Reading from the N-terminus, the 972-residue chain is Fibroblast growth factor receptor (972 aa).

Residues 1-43 (MSLPRCPRTRTVMFSRTLTRCYPQRTLWIAILCVICSWTLSTA) form the signal peptide. Over 44 to 547 (GATTIRDKEV…NNMQPTSKTQ (504 aa)) the chain is Extracellular. The region spanning 57-152 (APQDLTAIPV…YIEASGTPPI (96 aa)) is the Fibronectin type-III domain. 12 N-linked (GlcNAc...) asparagine glycosylation sites follow: N109, N121, N191, N203, N239, N272, N315, N390, N398, N419, N422, and N460. One can recognise an Ig-like C2-type 1 domain in the interval 150–242 (PPIPPTLRRN…GQPIHVNFTL (93 aa)). C176 and C226 form a disulfide bridge. Ig-like C2-type domains lie at 282–374 (PRFT…YDVK) and 383–517 (PIMS…AYLD). A disulfide bridge links C306 with C358. C403 and C501 are joined by a disulfide. The chain crosses the membrane as a helical span at residues 548 to 568 (LIIFSVVGFVVVLILVTCIAI). Residues 569-972 (LCKQTQVRHR…QTRDCCPYAN (404 aa)) are Cytoplasmic-facing. The Protein kinase domain occupies 639–925 (LTVGKTIGEG…ISVSSNQDYL (287 aa)). Residues 645–653 (IGEGAFGKV) and K673 contribute to the ATP site. D781 serves as the catalytic Proton acceptor. Y812 carries the phosphotyrosine; by autocatalysis modification.

This sequence belongs to the protein kinase superfamily. Tyr protein kinase family. Fibroblast growth factor receptor subfamily.

It localises to the membrane. It carries out the reaction L-tyrosyl-[protein] + ATP = O-phospho-L-tyrosyl-[protein] + ADP + H(+). Functionally, receptor for basic fibroblast growth factor. The protein is Fibroblast growth factor receptor (FGFR) of Strongylocentrotus purpuratus (Purple sea urchin).